We begin with the raw amino-acid sequence, 201 residues long: ATP-dependent Clp protease proteolytic subunit (201 aa).

Ser105 (nucleophile) is an active-site residue. His130 is a catalytic residue.

This sequence belongs to the peptidase S14 family. Fourteen ClpP subunits assemble into 2 heptameric rings which stack back to back to give a disk-like structure with a central cavity, resembling the structure of eukaryotic proteasomes.

It is found in the cytoplasm. It catalyses the reaction Hydrolysis of proteins to small peptides in the presence of ATP and magnesium. alpha-casein is the usual test substrate. In the absence of ATP, only oligopeptides shorter than five residues are hydrolyzed (such as succinyl-Leu-Tyr-|-NHMec, and Leu-Tyr-Leu-|-Tyr-Trp, in which cleavage of the -Tyr-|-Leu- and -Tyr-|-Trp bonds also occurs).. Its function is as follows. Cleaves peptides in various proteins in a process that requires ATP hydrolysis. Has a chymotrypsin-like activity. Plays a major role in the degradation of misfolded proteins. This is ATP-dependent Clp protease proteolytic subunit from Acinetobacter baylyi (strain ATCC 33305 / BD413 / ADP1).